We begin with the raw amino-acid sequence, 575 residues long: MAVAPNVSDLQSGVVKASQMARAALEHTLQHHQLQDFILAAILASIILLIIRNSMLSPLRGIPGPRLAGLTSLYEFYYDVIKNGTYAHQHPKMHQQYDSTIIRISPNHVHIADPELFAIGPAGSRFRKARYYYNSIGMSTAIGSHYDVEAHHRHRSTMAVGFSTKSLQAFDPIIVNYAREIMDIIASRGLKGTPVVLSHHTQAYTIDVVAKISFGQPVGAMHEVGDHPPTVQAMDCFSNHFNFTKHFPYWQLILPFMPTSAVKRIMPGVHYIKEVGTRLITNLIEQRRIEGRLDEEYQEGKGAIFETLLKPNPKKQYPAPDLNGLVEDACAFLVGGSDTTGLTLQAVTLFVLRNPDVLCALRAELDSASEFIRDSFDIHQVSKLPWLTAVIRETMRLLPPTPGPLPREVPPEGIRVGKYFLPGGNANKGPGRQPGDAEFRPLSPAVCSLYITIPASTQTQKGSSRSVGWEKAVRAWWSGGTHSVVDHARVSDASTSCAYFVFSSSIICGREQHTDERFLACRVAWHELLAFLALLFLRFDLELYESDETNLEWTEHMFTRIRAPVQVRIMKDRWA.

N-linked (GlcNAc...) asparagine glycosylation is present at Asn6. The helical transmembrane segment at 37–57 threads the bilayer; it reads FILAAILASIILLIIRNSMLS. Asn83 and Asn242 each carry an N-linked (GlcNAc...) asparagine glycan. Position 521 (Cys521) interacts with heme.

It belongs to the cytochrome P450 family. Requires heme as cofactor.

It is found in the membrane. It participates in secondary metabolite biosynthesis. Cytochrome P450 monooxygenase; part of the gene cluster that mediates the biosynthesis of oxepinamides, derivatives of anthranilyl-containing tripeptides that share an oxepin ring and a fused pyrimidinone moiety. The nonribosomal peptide synthetase (NRPS) opaA assembles the quinazolinone core with D-Phe incorporation. The first adenylation domain (A1) of opaA loads and activates anthranilic acid whereas the second A domain (A2) is for activating of L-Phe, which is then converted to D-form by the E domain. The third A domain (A3) is responsible for L-Ile activation and the terminal condensation domain C3 for cyclization and releasing the NRPS product protuboxepin K. The cytochrome P450 monooxygenase opaB then catalyzes alone the oxepin ring formation to convert protuboxepin K into protuboxepin A. The flavoenzyme opaC installs subsequently one hydroxyl group at the oxepin ring, accompanied by double bond migration, to form 15-epi-oxepinamide E. The epimerase opaE changes the D-Phe residue back to L-form, leading to oxepinamide E, which is further methylated at the hydroxyl group at C-12 by the O-methyltransferase OpaF to yield oxepinamide F. In Aspergillus ustus, this protein is Cytochrome P450 monooxygenase opaB.